Consider the following 274-residue polypeptide: Acyl-[acyl-carrier-protein]--UDP-N-acetylglucosamine O-acyltransferase (274 aa).

This sequence belongs to the transferase hexapeptide repeat family. LpxA subfamily. Homotrimer.

The protein localises to the cytoplasm. The catalysed reaction is a (3R)-hydroxyacyl-[ACP] + UDP-N-acetyl-alpha-D-glucosamine = a UDP-3-O-[(3R)-3-hydroxyacyl]-N-acetyl-alpha-D-glucosamine + holo-[ACP]. It participates in glycolipid biosynthesis; lipid IV(A) biosynthesis; lipid IV(A) from (3R)-3-hydroxytetradecanoyl-[acyl-carrier-protein] and UDP-N-acetyl-alpha-D-glucosamine: step 1/6. Involved in the biosynthesis of lipid A, a phosphorylated glycolipid that anchors the lipopolysaccharide to the outer membrane of the cell. In Bartonella quintana (strain Toulouse) (Rochalimaea quintana), this protein is Acyl-[acyl-carrier-protein]--UDP-N-acetylglucosamine O-acyltransferase.